The sequence spans 670 residues: Polar flagellar hook-associated protein 2 (670 aa).

The segment at 226 to 300 is disordered; the sequence is PLQAPQQPDQ…RSSLRPEERI (75 aa). A compositionally biased stretch (acidic residues) spans 257–266; sequence AQDDAQDDAS. The segment covering 272–283 has biased composition (low complexity); that stretch reads AAGAEAAKAGQE. Positions 284-300 are enriched in basic and acidic residues; sequence AIDKANQRSSLRPEERI. Residues 342–428 adopt a coiled-coil conformation; the sequence is GTLTDSYVTT…AQSSFEEYLG (87 aa).

The protein belongs to the FliD family. As to quaternary structure, homopentamer.

Its subcellular location is the secreted. The protein localises to the bacterial flagellum. Functionally, required for the morphogenesis and for the elongation of the flagellar filament by facilitating polymerization of the flagellin monomers at the tip of growing filament. Forms a capping structure, which prevents flagellin subunits (transported through the central channel of the flagellum) from leaking out without polymerization at the distal end. Important for swimming motility. The sequence is that of Polar flagellar hook-associated protein 2 (fliDP) from Vibrio parahaemolyticus serotype O3:K6 (strain RIMD 2210633).